We begin with the raw amino-acid sequence, 358 residues long: Heat-inducible transcription repressor HrcA (358 aa).

The protein belongs to the HrcA family.

In terms of biological role, negative regulator of class I heat shock genes (grpE-dnaK-dnaJ and groELS operons). Prevents heat-shock induction of these operons. The chain is Heat-inducible transcription repressor HrcA from Caulobacter vibrioides (strain ATCC 19089 / CIP 103742 / CB 15) (Caulobacter crescentus).